The chain runs to 446 residues: Beta-glucosidase A (446 aa).

Glutamate 166 functions as the Proton donor in the catalytic mechanism. The active-site Nucleophile is the glutamate 351.

The protein belongs to the glycosyl hydrolase 1 family.

It catalyses the reaction Hydrolysis of terminal, non-reducing beta-D-glucosyl residues with release of beta-D-glucose.. The protein operates within glycan metabolism; cellulose degradation. The sequence is that of Beta-glucosidase A (bglA) from Thermotoga maritima (strain ATCC 43589 / DSM 3109 / JCM 10099 / NBRC 100826 / MSB8).